Reading from the N-terminus, the 474-residue chain is Bifunctional protein HldE (474 aa).

The segment at 1–318 is ribokinase; it reads MKVTLPDFNK…ENAIRGRADN (318 aa). Residue 195-198 coordinates ATP; sequence NMSE. Aspartate 264 is a catalytic residue. Residues 344 to 474 form a cytidylyltransferase region; sequence MTNGCFDILH…TNIINAIKKK (131 aa).

This sequence in the N-terminal section; belongs to the carbohydrate kinase PfkB family. In the C-terminal section; belongs to the cytidylyltransferase family. Homodimer.

The catalysed reaction is D-glycero-beta-D-manno-heptose 7-phosphate + ATP = D-glycero-beta-D-manno-heptose 1,7-bisphosphate + ADP + H(+). The enzyme catalyses D-glycero-beta-D-manno-heptose 1-phosphate + ATP + H(+) = ADP-D-glycero-beta-D-manno-heptose + diphosphate. The protein operates within nucleotide-sugar biosynthesis; ADP-L-glycero-beta-D-manno-heptose biosynthesis; ADP-L-glycero-beta-D-manno-heptose from D-glycero-beta-D-manno-heptose 7-phosphate: step 1/4. It functions in the pathway nucleotide-sugar biosynthesis; ADP-L-glycero-beta-D-manno-heptose biosynthesis; ADP-L-glycero-beta-D-manno-heptose from D-glycero-beta-D-manno-heptose 7-phosphate: step 3/4. Its function is as follows. Catalyzes the phosphorylation of D-glycero-D-manno-heptose 7-phosphate at the C-1 position to selectively form D-glycero-beta-D-manno-heptose-1,7-bisphosphate. Functionally, catalyzes the ADP transfer from ATP to D-glycero-beta-D-manno-heptose 1-phosphate, yielding ADP-D-glycero-beta-D-manno-heptose. The polypeptide is Bifunctional protein HldE (Proteus mirabilis (strain HI4320)).